We begin with the raw amino-acid sequence, 44 residues long: Thymosin beta-4 (44 aa).

Composition is skewed to basic and acidic residues over residues 1–25 (MSDKPDMAEIEKFDKAKLKKTETQE) and 33–44 (ETIEQEKQTSES). Residues 1-44 (MSDKPDMAEIEKFDKAKLKKTETQEKNPLPSKETIEQEKQTSES) form a disordered region. Ser2 bears the N-acetylserine mark.

Belongs to the thymosin beta family. As to expression, spleen, kidney, heart, and oocytes.

It localises to the cytoplasm. Its subcellular location is the cytoskeleton. In terms of biological role, plays an important role in the organization of the cytoskeleton. Binds to and sequesters actin monomers (G actin) and therefore inhibits actin polymerization. The chain is Thymosin beta-4 (tmsb4) from Xenopus laevis (African clawed frog).